An 848-amino-acid polypeptide reads, in one-letter code: Paramyosin (848 aa).

Residues 1-9 (AFGSMSVAD) are nonhelical region. Residues 10-833 (LGSLTRLEDK…HLIRAKHRSS (824 aa)) are a coiled coil. The nonhelical region stretch occupies residues 834–848 (VVTGKNASASKIYVL).

Belongs to the paramyosin family. In terms of assembly, homodimer.

The protein localises to the cytoplasm. It localises to the myofibril. Functionally, paramyosin is a major structural component of many thick filaments isolated from invertebrate muscles. The protein is Paramyosin of Dirofilaria immitis (Canine heartworm).